The sequence spans 230 residues: Protein CbbY (230 aa).

Residue Asp-8 is the Nucleophile of the active site. Mg(2+) contacts are provided by Asp-8 and Asp-10. Asp-8 provides a ligand contact to substrate. Residue Asp-10 is the Proton donor of the active site. Substrate is bound by residues Glu-17, 50 to 54 (GGKER), 75 to 78 (HRAK), and 115 to 121 (TTTSLPN). Position 176 (Asp-176) interacts with Mg(2+).

The protein belongs to the HAD-like hydrolase superfamily. CbbY/CbbZ/Gph/YieH family. The cofactor is Mg(2+).

The catalysed reaction is D-xylulose 1,5-bisphosphate + H2O = D-xylulose 5-phosphate + phosphate. In terms of biological role, highly selective xylulose-1,5-bisphosphate (XuBP) phosphatase. Also shows activity towards ribulose-1,5-bisphosphate (RuBP) and fructose-1,6-bisphosphate (FBP), but not towards fructose-6-phosphate (F6P) or ribulose-5-phosphate (Ru5P). Degrades xylulose-1,5-bisphosphate, a potent inhibitor of rubisco produced by the rubisco itself. The protein is Protein CbbY of Cereibacter sphaeroides (Rhodobacter sphaeroides).